We begin with the raw amino-acid sequence, 131 residues long: Interleukin-13 (131 aa).

The first 18 residues, 1-18, serve as a signal peptide directing secretion; that stretch reads MALWLTVVIALTCLGGLA. N-linked (GlcNAc...) asparagine glycans are attached at residues Asn38, Asn48, Asn56, and Asn71. 2 disulfide bridges follow: Cys47-Cys75 and Cys63-Cys89.

The protein belongs to the IL-4/IL-13 family. In terms of assembly, interacts with IL13RA2.

It is found in the secreted. Cytokine that plays important roles in allergic inflammation and immune response to parasite infection. Synergizes with IL2 in regulating interferon-gamma synthesis. Stimulates B-cell proliferation, and activation of eosinophils, basophils, and mast cells. Plays an important role in controlling IL33 activity by modulating the production of transmembrane and soluble forms of interleukin-1 receptor-like 1/IL1RL1. Displays the capacity to antagonize Th1-driven proinflammatory immune response and downregulates synthesis of many proinflammatory cytokines including IL1, IL6, IL10, IL12 and TNF-alpha through a mechanism that partially involves suppression of NF-kappa-B. Also functions on nonhematopoietic cells, including endothelial cells where it induces vascular cell adhesion protein 1/VCAM1, which is important in the recruitment of eosinophils. Exerts its biological effects through its receptors which comprises the IL4R chain and the IL13RA1 chain, to activate JAK1 and TYK2, leading to the activation of STAT6. Aside from IL13RA1, another receptor IL13RA2 acts as a high affinity decoy for IL13 and mediates internalization and depletion of extracellular IL13. The chain is Interleukin-13 (IL13) from Canis lupus familiaris (Dog).